We begin with the raw amino-acid sequence, 463 residues long: MSNRMWGGRFASGPAEIMEEINASIGFDRRLAPQDIRGSLAHVAMLGSRGILPAEDVAAIEAGLKSVEAEIERGEFVFRRELEDIHMAVESRLTEIVGPAAGRLHTARSRNDQVATDMRLWVRDTLDALDAQVADLQRALAETAQKHADTVMPGFTHLQSAQPVTFGHHCLAYVEMLARDRGRFRDARARLNECPLGSAALAGTSFPIDRHATAAALGFDRPTANSLDSVADRDFALESLSAASICAVHLSRFAEELVVWTSAQFGFVRLSDRFTTGSSIMPQKRNPDAAELVRAKAGRIIGALTGLLVVMKGLPLAYSKDMQEDKEGTFDALQSLSLCLAAMAGMVRDLEPVAETLKRAAGSGYATATDLADWLVRELNMPFRQAHHVTGRVVAAASERGIGLEDLSLDAMQAIEPGITQAVFAVLGVENSVASRTSYGGTAPDNVRRQAQAWLERLGPVEK.

This sequence belongs to the lyase 1 family. Argininosuccinate lyase subfamily.

It localises to the cytoplasm. It carries out the reaction 2-(N(omega)-L-arginino)succinate = fumarate + L-arginine. Its pathway is amino-acid biosynthesis; L-arginine biosynthesis; L-arginine from L-ornithine and carbamoyl phosphate: step 3/3. The chain is Argininosuccinate lyase from Methylorubrum populi (strain ATCC BAA-705 / NCIMB 13946 / BJ001) (Methylobacterium populi).